Consider the following 461-residue polypeptide: Peptidyl-prolyl cis-trans isomerase-like 4 (461 aa).

The PPIase cyclophilin-type domain maps to 1–171; the sequence is MSVLLETSLG…KDIRIRHTVI (171 aa). The 79-residue stretch at 248–326 folds into the RRM domain; that stretch reads NVLFVCKLNP…HRIHVDFSQS (79 aa). A disordered region spans residues 372 to 461; the sequence is NYNMVFDKND…DDRYRDRRRR (90 aa). Basic and acidic residues-rich tracts occupy residues 378–392 and 400–461; these read DKND…ERSY and NYRD…RRRR.

Belongs to the cyclophilin-type PPIase family. PPIL4 subfamily.

The protein localises to the nucleus. It catalyses the reaction [protein]-peptidylproline (omega=180) = [protein]-peptidylproline (omega=0). Functionally, PPIases accelerate the folding of proteins. It catalyzes the cis-trans isomerization of proline imidic peptide bonds in oligopeptides. The protein is Peptidyl-prolyl cis-trans isomerase-like 4 (cyp6) of Emericella nidulans (strain FGSC A4 / ATCC 38163 / CBS 112.46 / NRRL 194 / M139) (Aspergillus nidulans).